Consider the following 492-residue polypeptide: Protein nucleotidyltransferase YdiU (492 aa).

Residues G95, G97, R98, K118, D130, G131, R181, and R188 each contribute to the ATP site. The Proton acceptor role is filled by D257. Positions 258 and 267 each coordinate Mg(2+). D267 lines the ATP pocket. A compositionally biased stretch (basic and acidic residues) spans 466-475; the sequence is YDDQPEHAEY. Residues 466-492 are disordered; it reads YDDQPEHAEYRQPPPPSEKPYQTFCGT.

This sequence belongs to the SELO family. It depends on Mg(2+) as a cofactor. Requires Mn(2+) as cofactor.

The enzyme catalyses L-seryl-[protein] + ATP = 3-O-(5'-adenylyl)-L-seryl-[protein] + diphosphate. It carries out the reaction L-threonyl-[protein] + ATP = 3-O-(5'-adenylyl)-L-threonyl-[protein] + diphosphate. It catalyses the reaction L-tyrosyl-[protein] + ATP = O-(5'-adenylyl)-L-tyrosyl-[protein] + diphosphate. The catalysed reaction is L-histidyl-[protein] + UTP = N(tele)-(5'-uridylyl)-L-histidyl-[protein] + diphosphate. The enzyme catalyses L-seryl-[protein] + UTP = O-(5'-uridylyl)-L-seryl-[protein] + diphosphate. It carries out the reaction L-tyrosyl-[protein] + UTP = O-(5'-uridylyl)-L-tyrosyl-[protein] + diphosphate. Its function is as follows. Nucleotidyltransferase involved in the post-translational modification of proteins. It can catalyze the addition of adenosine monophosphate (AMP) or uridine monophosphate (UMP) to a protein, resulting in modifications known as AMPylation and UMPylation. The protein is Protein nucleotidyltransferase YdiU of Syntrophotalea carbinolica (strain DSM 2380 / NBRC 103641 / GraBd1) (Pelobacter carbinolicus).